The following is a 360-amino-acid chain: Uroporphyrinogen decarboxylase (360 aa).

Substrate contacts are provided by residues 27–31, F46, D77, Y154, T209, and H327; that span reads RQSGR.

This sequence belongs to the uroporphyrinogen decarboxylase family. In terms of assembly, homodimer.

The protein resides in the cytoplasm. The catalysed reaction is uroporphyrinogen III + 4 H(+) = coproporphyrinogen III + 4 CO2. It participates in porphyrin-containing compound metabolism; protoporphyrin-IX biosynthesis; coproporphyrinogen-III from 5-aminolevulinate: step 4/4. Functionally, catalyzes the decarboxylation of four acetate groups of uroporphyrinogen-III to yield coproporphyrinogen-III. This chain is Uroporphyrinogen decarboxylase, found in Wigglesworthia glossinidia brevipalpis.